The primary structure comprises 318 residues: Ribosomal protein L11 methyltransferase (318 aa).

Residues threonine 161, glycine 182, aspartate 204, and asparagine 247 each coordinate S-adenosyl-L-methionine.

Belongs to the methyltransferase superfamily. PrmA family.

It localises to the cytoplasm. The catalysed reaction is L-lysyl-[protein] + 3 S-adenosyl-L-methionine = N(6),N(6),N(6)-trimethyl-L-lysyl-[protein] + 3 S-adenosyl-L-homocysteine + 3 H(+). In terms of biological role, methylates ribosomal protein L11. This Moorella thermoacetica (strain ATCC 39073 / JCM 9320) protein is Ribosomal protein L11 methyltransferase.